The sequence spans 158 residues: NAD(P)H-quinone oxidoreductase subunit J, chloroplastic (158 aa).

The protein belongs to the complex I 30 kDa subunit family. NDH is composed of at least 16 different subunits, 5 of which are encoded in the nucleus.

The protein localises to the plastid. It localises to the chloroplast thylakoid membrane. The catalysed reaction is a plastoquinone + NADH + (n+1) H(+)(in) = a plastoquinol + NAD(+) + n H(+)(out). It carries out the reaction a plastoquinone + NADPH + (n+1) H(+)(in) = a plastoquinol + NADP(+) + n H(+)(out). NDH shuttles electrons from NAD(P)H:plastoquinone, via FMN and iron-sulfur (Fe-S) centers, to quinones in the photosynthetic chain and possibly in a chloroplast respiratory chain. The immediate electron acceptor for the enzyme in this species is believed to be plastoquinone. Couples the redox reaction to proton translocation, and thus conserves the redox energy in a proton gradient. This chain is NAD(P)H-quinone oxidoreductase subunit J, chloroplastic, found in Acorus calamus var. americanus (American sweet flag).